The chain runs to 659 residues: Putative cysteine-rich receptor-like protein kinase 39 (659 aa).

Residues 1–27 (MGKYSVLMIFIASSLLIVLQNVEIVNA) form the signal peptide. 2 consecutive Gnk2-homologous domains span residues 28-134 (VGCT…NHST) and 142-253 (PSVR…LYAF). The Extracellular portion of the chain corresponds to 28–289 (VGCTGSFFNG…KKKGRSIGYG (262 aa)). Residues Asn38, Asn64, Asn122, Asn131, Asn157, Asn170, Asn259, and Asn274 are each glycosylated (N-linked (GlcNAc...) asparagine). A helical transmembrane segment spans residues 290-310 (GIIAIVVVLTFINILVFIGYI). At 311-659 (KVYGRRKESY…DDVFTELSCR (349 aa)) the chain is on the cytoplasmic side. Residues 353 to 619 (FSSENTLGQG…PTMSSVIIWL (267 aa)) enclose the Protein kinase domain. Residues 359 to 367 (LGQGGFGTV) and Lys381 contribute to the ATP site. Phosphotyrosine is present on Tyr426. The active-site Proton acceptor is the Asp478. Ser482 bears the Phosphoserine mark. Thr518 is subject to Phosphothreonine. Tyr526 carries the post-translational modification Phosphotyrosine.

The protein belongs to the protein kinase superfamily. Ser/Thr protein kinase family. CRK subfamily.

Its subcellular location is the membrane. It catalyses the reaction L-seryl-[protein] + ATP = O-phospho-L-seryl-[protein] + ADP + H(+). The catalysed reaction is L-threonyl-[protein] + ATP = O-phospho-L-threonyl-[protein] + ADP + H(+). The protein is Putative cysteine-rich receptor-like protein kinase 39 (CRK39) of Arabidopsis thaliana (Mouse-ear cress).